A 3123-amino-acid chain; its full sequence is MKLQHHKTNRQRISKPHRDPKWASICLWLLVTLAFSTHLARSQESRQTEDSKEVELLQDNDIEFASLDGASQLLPATRHSGADVTVAPQGSTPSMTSSSSYTELQGGEILSDRILRRSESPYLARDDIEVLRGARLTIEPGVTIEFAPTKGLKINGVLQAVGTPTSRIVLKSQSNTANYKLELPDDQEKGIRLVDGPTPVEGRLQLFHKGAWRSVCSNSRNWTLADYGVACKQLGYRGGRFWNWVERTPGYYPRLLYEQPKCKGGEGSLQDCAWTSRQMGAGACDYHNDLGIQCLPVHSETLGHWRGIYFDNAPSTKALGRDNIVYAAQSESRLKYVDIIRAGSGAGFNAKSAVEVQGLPPQMEHVVISHSAYTGFNSTRPWAGFQLQNVTVRKCNGIGVFVNSSQGAVQLDGCSIVDNAGDGIKYVGHDLRGTERKDRASIYDFCTLPTTSGQTYPISLSFTQKYYAGSGKECGKYFFTRPGYLLTLHFENFVLMQNETATVEIYDGASTNDRLLFEWKARNFTRPQSVTSTREKMFVRIRADARQELNGFFRMTSGDSVAYDLKVSQSTVEDNGGRGVAIDNIRSKLHVHSSSVSGNGHVAGVHVTSGAGDVNITSSNISFNNGAGVNITYYGGNRNISRSALTANKGYGVATWLNQTSDVNRMEYIPFNQTSVVEYSQIGGNLETGVFHGNFCRPIWVNITGNSFNGSQQNDIFIESCYQATANGRPNMQLQLGHNQFKYSQANSIYLSPALNLQGRIEYNMFRFGSYGCLFINNDYIYPEFNYFPVKLIIQSNYFMRNSGVHVVSLGLSPYSRAEVQYILFTRNFVRGNNITEAFGPLIAGSEGSDGAGRLNPRSRVAAPVVVGSSNVDIFRNILHNLDSMYEIGSQLTDQSKIINATCNWLGHTDENKIYARLFHRNDRYNLAKINYLPYLLHSSNPGSTAMITVSTVVPRFFHEGSDVIGGEVDGQDMVPAGTYTVTKDINIRPGGKLILQPGTTLKFEPSVGMMVAGKLEARGRRPDDILFTLKRETIMGESNDTETIDLDSETEAIDMETEVIPADGVPRVPVRLVGGAGANEGRLQVYLKGRWGTVCDYGWNVLNAALVCHQLGYSLNPQDWRLLRSQLPNAGTSEDILMANVRCTLQDRDVTKCRAEYEFENTCSHENDVGLRCYEGAWAGVRFSMLAERADLQYVTVEKAGLFDYTTNAFKPAVQMDHARHNLENVRIVNNLQDGLGIIYADIYAGKSVNNIKNSEFSGNKGSGISLKQLDFRVSGSIIKDNKGSGVSHDAVISALDQKEIGGWFNMATDFNSFDTDYDPYLLPREISNIDLGTFEHKYIRTEELLGQNINRKIVVQCPAGYVIGIQLLNPIHNLSTESINILNARTENIRSDLWQVKRDLNVFPVTSSSYGIIIYYESGLQALGGAVLMLSTVTAPVQNIRNRIVSGAVPTLTIRSTKIQKNLRGITGIYYNRYIGDNGEYYLRKANESIKLINSELSYNEREAILIRSPFWDVISSNLSEVTLHVNGSLITQNGLGIRQMSKDLRSSNNLFHYVIQDTTFEQNTHGGFQVSLPYVWQYNENFTHSIYFGNSTWQRNRDFRISVSGHYTVFNITSNVFRENNCPGALISLDGMEKRLRFDNNRFESNNAKFVLLFKADSLSEIIGQVPASIEFNSFKGNNIVTMTANYRNHYMKVARRIRKQHKIPTAVIRLDGVQNVRLYRNLIAENEMDYNLVAGVRSARLNNYFEARENWWGTKDTAFIEAKIFDFDNWNDHADVIYQPFLIEDSYDASVSVVVPFNQDQEIDLTNYKGGRVYKDLLLTKQSTPYYISSDITVMPGKTLTINHGVTMEFEPNVGILVLGTLVAIGYRESPIVMRPFRNATRESLIDVQPKKRALEDMSAPLTEFDSIRLCTSANNCTGDADGLFGLNEGFLEYFNHTTLQWVPICDSRFTERNAQVVCRELGYDPLNVYYGHDRRIEFHTNSLTRIWSWVQPLECRGDEERMEDCAERLNGQLYGHRHECRWDDVFVFVSCNGIADDEVYWGGIRFANSKFEEIQYEHRLHNTRSHARLPLRESQLEFVRIEQAGILHNHKAAAIQAIHKNPSITSVSIENSANHGINMIAPSGKLNLNHLNINNTLGTGISIVSLSGEGRDSDESSFTPLKKLDLPYKLFSLVDICDPQKVLTIEERMLIYYKYDNNPVNCVKIFTSAFRAKPIGFRLLQSNLFNHSKLYGRTDFIKLYDGDIYNVTATYLGKIESDTDNQRSFFKTKGPTMSLQLVASGAPETHGFIAEVVTVPISTLGQYRDALHNITDTHISGAIKGAVTYSSAGEVTPTLTLIGNRIEKNCRQLYGNFSTCTSALNLDVQNMNSLYFMNNLITENQGGLRIRADSRGSATSLRGFVHHNLFMRNRNRPALYVEGRQSSPYQEVELYRNYFAQNMAGYEDVIRLCQVVSNFSYNYVHSNVGGRIMEVSGFEKVRLQIYQTTAHNGFYRNFATNWMTRATIVAGTAGQQYVDNIFENHENDYELLTVNNSILSFDYENRTFETWSSKIDARHNYWSYNNTISVQSRIRDKSDDPMLLEVLAVPFQMNNETILDGKCPPGWALVHDTCFIYVGAPMTFHEARDFCRSENSTMPFIRTDKTTLWKYLQSQMRHLKYPDKVWIQDYNHIDRCTSFVFGEIEIEDCNKERGFICESDPRVIIDPLSWRADIFAISIISAFVLAIILLILVAFCWFAKSKHRHTQRLQRRNSIRQSLRSLNSIDPQGSLRRRPNYNMSSNGTLSKGQDYKQMVANGSIDSMDKSVLSSEAGSFEGYEQKPHYNEYVNQNALRPAHPAQDHQSHKVATISKASGHRARAAAAAAAALEPDAFELSYRNEGFRDNSTYGDNTRANSISTSVAEDTPIIHHTDQEIDEGGSDYYGNASTLPLRTEGGTPAGRRGQPGLAFLSELKQNLPEYQRSSHSSFMPHRSSGDSLPFDQKLDQFNYSTESSLYRPAPAVPSSQQATPADMRRPDSYYTAVRSSKAPVSHYRTPRPLAQPPAAPNVAPAGGPAQRRPKTVYQTASEESSPTTPSPLTNQYHRSKSEALLETDFDGDGGSVGLQPLQTNGRSHSQPLETAM.

An N-terminal signal peptide occupies residues 1–34 (MKLQHHKTNRQRISKPHRDPKWASICLWLLVTLA). Residues 35-2714 (FSTHLARSQE…IIDPLSWRAD (2680 aa)) are Extracellular-facing. Residues 83-104 (DVTVAPQGSTPSMTSSSSYTEL) form a disordered region. The segment covering 91-102 (STPSMTSSSSYT) has biased composition (low complexity). One can recognise an SRCR 1 domain in the interval 191–295 (IRLVDGPTPV…YHNDLGIQCL (105 aa)). Disulfide bonds link Cys-216–Cys-284, Cys-231–Cys-294, and Cys-262–Cys-272. A glycan (N-linked (GlcNAc...) asparagine) is linked at Asn-221. PbH1 repeat units lie at residues 358 to 380 (GLPP…NSTR), 382 to 404 (WAGF…FVNS), and 406 to 428 (QGAV…KYVG). Residues Asn-377, Asn-389, and Asn-403 are each glycosylated (N-linked (GlcNAc...) asparagine). Cys-446 and Cys-474 form a disulfide bridge. The CUB domain occupies 446 to 559 (CTLPTTSGQT…NGFFRMTSGD (114 aa)). 2 N-linked (GlcNAc...) asparagine glycosylation sites follow: Asn-498 and Asn-523. 3 PbH1 repeats span residues 562–584 (AYDL…AIDN), 586–609 (RSKL…HVTS), and 611–633 (AGDV…NITY). N-linked (GlcNAc...) asparagine glycans are attached at residues Asn-615, Asn-620, Asn-630, Asn-639, Asn-658, Asn-672, Asn-702, and Asn-709. PbH1 repeat units lie at residues 756–778 (NLQG…FINN) and 789–809 (PVKL…HVVS). N-linked (GlcNAc...) asparagine glycans are attached at residues Asn-834, Asn-900, and Asn-1040. Residues 1071–1175 (VRLVGGAGAN…HENDVGLRCY (105 aa)) form the SRCR 2 domain. Disulfide bonds link Cys-1096–Cys-1164, Cys-1109–Cys-1174, and Cys-1144–Cys-1154. PbH1 repeat units follow at residues 1219-1241 (HARH…GIIY) and 1248-1270 (KSVN…SLKQ). Asn-1375 carries N-linked (GlcNAc...) asparagine glycosylation. PbH1 repeat units follow at residues 1451 to 1475 (VPTL…YYNR) and 1489 to 1511 (NESI…LIRS). Residues Asn-1489, Asn-1520, and Asn-1529 are each glycosylated (N-linked (GlcNAc...) asparagine). One copy of the PbH1 13 repeat lies at 1553 to 1575 (LFHYVIQDTTFEQNTHGGFQVSL). Residues Asn-1584, Asn-1593, and Asn-1614 are each glycosylated (N-linked (GlcNAc...) asparagine). One copy of the PbH1 14 repeat lies at 1722–1744 (LYRNLIAENEMDYNLVAGVRSAR). N-linked (GlcNAc...) asparagine glycosylation is found at Asn-1883, Asn-1920, and Asn-1940. Residues 1912–2037 (IRLCTSANNC…DDVFVFVSCN (126 aa)) enclose the SRCR 3 domain. 3 disulfides stabilise this stretch: Cys-1950–Cys-2025, Cys-1963–Cys-2036, and Cys-2000–Cys-2010. 2 PbH1 repeats span residues 2104–2126 (HKNP…NMIA) and 2128–2150 (SGKL…SIVS). Residues Asn-2139, Asn-2231, Asn-2251, Asn-2314, and Asn-2357 are each glycosylated (N-linked (GlcNAc...) asparagine). 3 PbH1 repeats span residues 2337 to 2361 (TPTL…FSTC), 2372 to 2393 (MNSL…RIRA), and 2401 to 2424 (SLRG…YVEG). Asn-2459, Asn-2536, Asn-2546, Asn-2566, Asn-2596, and Asn-2636 each carry an N-linked (GlcNAc...) asparagine glycan. The helical transmembrane segment at 2715–2735 (IFAISIISAFVLAIILLILVA) threads the bilayer. The Cytoplasmic portion of the chain corresponds to 2736 to 3123 (FCWFAKSKHR…SHSQPLETAM (388 aa)). 4 disordered regions span residues 2766–2789 (IDPQ…LSKG), 2961–2983 (YQRS…PFDQ), 2996–3015 (LYRP…ADMR), and 3025–3123 (RSSK…ETAM). Residues 2778-2788 (YNMSSNGTLSK) show a composition bias toward polar residues. A compositionally biased stretch (low complexity) spans 2964–2973 (SSHSSFMPHR). 2 stretches are compositionally biased toward low complexity: residues 3047 to 3057 (PNVAPAGGPAQ) and 3068 to 3078 (SEESSPTTPSP). A compositionally biased stretch (polar residues) spans 3107 to 3123 (PLQTNGRSHSQPLETAM).

N-glycosylated. In terms of processing, may be proteolytically cleaved in the extracellular domain. In terms of tissue distribution, expression detected in embryonic epithelia and central nervous system (at protein level). First detected during stage 13 in the tracheal system, the foregut, the hindgut, the salivary glands and the epidermis. Expression persists in these tissues until the end of embryogenesis. Expression in epithelia declines from late stage 15 and expression appears in the central nervous system during stage 16.

It is found in the cell membrane. The protein localises to the cell junction. It localises to the septate junction. The protein resides in the adherens junction. Functionally, required for the maturation but not the establishment of septate junctions in developing epithelial cells and is involved in epithelial cell adhesion during septate junction maturation. Plays a role in the proper localization of the septate junction core components pck/mega, kune, Nrx-IV and Nrg during late embryogenesis. Involved in the formation of tricellular junctions which mediate cell contact where three epithelial cells meet but not of bicellular junctions. Required for the accumulation of Gli at tricellular junctions. In Drosophila melanogaster (Fruit fly), this protein is Protein bark beetle.